The sequence spans 379 residues: Forkhead box protein F1 (379 aa).

A disordered region spans residues 1–45 (MSSAPEKQQPPHGGGGGGGGGGGAAMDPASSGPSKAKKTNAGIRR). The segment covering 12 to 24 (HGGGGGGGGGGGA) has biased composition (gly residues). Positions 47 to 138 (EKPPYSYIAL…EFMFEEGSFR (92 aa)) form a DNA-binding region, fork-head.

In terms of tissue distribution, expressed in lung and placenta.

It localises to the nucleus. Functionally, probable transcription activator for a number of lung-specific genes. This Homo sapiens (Human) protein is Forkhead box protein F1 (FOXF1).